The chain runs to 557 residues: Aerobic glycerol-3-phosphate dehydrogenase (557 aa).

21-49 lines the FAD pocket; the sequence is DVVIIGGGITGAGIALDASQRGMKVALVE.

This sequence belongs to the FAD-dependent glycerol-3-phosphate dehydrogenase family. Requires FAD as cofactor.

The protein localises to the cytoplasm. The catalysed reaction is a quinone + sn-glycerol 3-phosphate = dihydroxyacetone phosphate + a quinol. It functions in the pathway polyol metabolism; glycerol degradation via glycerol kinase pathway; glycerone phosphate from sn-glycerol 3-phosphate (aerobic route): step 1/1. This Staphylococcus haemolyticus (strain JCSC1435) protein is Aerobic glycerol-3-phosphate dehydrogenase (glpD).